The chain runs to 139 residues: Serpin-like protein HMSD (139 aa).

The first 20 residues, 1–20 (MSISSALAMVFMGAKGNTAA), serve as a signal peptide directing secretion. The N-linked (GlcNAc...) asparagine glycan is linked to asparagine 50.

It belongs to the serpin family. In terms of tissue distribution, highly expressed in dendritic cells and primary leukemia cells, especially those of myeloid lineage.

It localises to the secreted. Its function is as follows. Putative serine protease inhibitor. This chain is Serpin-like protein HMSD (HMSD), found in Homo sapiens (Human).